We begin with the raw amino-acid sequence, 2464 residues long: Highly reducing polyketide synthase xilA (2464 aa).

Positions 9 to 437 constitute a Ketosynthase family 3 (KS3) domain; that stretch reads HDPIALVGIG…GTNGHCIIDH (429 aa). Catalysis depends on for beta-ketoacyl synthase activity residues Cys-182, His-318, and His-360. Low complexity predominate over residues 461-487; that stretch reads QNGINGTNGTNGTNGTNGTNGTNGTNG. Positions 461–495 are disordered; that stretch reads QNGINGTNGTNGTNGTNGTNGTNGTNGHHNPKTEA. The 323-residue stretch at 589-911 folds into the Malonyl-CoA:ACP transacylase (MAT) domain; sequence FIFTGQGAQW…LKRNEDAQRL (323 aa). The interval 983 to 1121 is N-terminal hotdog fold; the sequence is HDLLGSKVPG…GQIKIEVSTF (139 aa). The 304-residue stretch at 983–1286 folds into the PKS/mFAS DH domain; it reads HDLLGSKVPG…FTSLNNEQES (304 aa). Catalysis depends on His-1015, which acts as the Proton acceptor; for dehydratase activity. Residues 1133–1286 are C-terminal hotdog fold; it reads GRLVDAQTWY…FTSLNNEQES (154 aa). Asp-1199 functions as the Proton donor; for dehydratase activity in the catalytic mechanism. Residues 1282-1490 form a methyltransferase (CMeT) domain region; it reads NEQESTSTGD…TEPAHHSTIT (209 aa). Residues 1716-2028 enclose the Enoyl reductase (ER) domain; sequence GILTSLYFKP…KGTHIGKMVI (313 aa). The Ketoreductase (KR) domain occupies 2052–2231; that stretch reads ANYILVGGMS…ATTVSLGFIN (180 aa). Positions 2383-2461 constitute a Carrier domain; that stretch reads ETVTFVTDAI…SIAQVIVEEA (79 aa). O-(pantetheine 4'-phosphoryl)serine is present on Ser-2420.

Pantetheine 4'-phosphate is required as a cofactor.

Its pathway is secondary metabolite biosynthesis. In terms of biological role, highly reducing polyketide synthase; part of the gene cluster that mediates the biosynthesis of the 6-methyl-2-pyrone derivative xylariolide D. XilA produces the 5-alkyl-6-methyl-2-pyrone backbone called prexylariolide D via sequential condensations of 4 malonyl-CoA units with one acetyl-CoA starter unit. During the biosynthesis, the linear polyketide chain is branched by the addition of an acetyl unit as the origin of the methyl group at the 2-pyrone ring. Prexylariolide D is then hydroxylated at the side chain by xilC to form the final product, xylariolide D. This Penicillium rubens (strain ATCC 28089 / DSM 1075 / NRRL 1951 / Wisconsin 54-1255) (Penicillium chrysogenum) protein is Highly reducing polyketide synthase xilA.